The sequence spans 336 residues: Biotin synthase (336 aa).

The region spanning 48–277 (VFGDEVEFCS…QAELRLCGGR (230 aa)) is the Radical SAM core domain. [4Fe-4S] cluster is bound by residues Cys-66, Cys-70, and Cys-73. [2Fe-2S] cluster-binding residues include Cys-110, Cys-142, Cys-202, and Arg-272.

The protein belongs to the radical SAM superfamily. Biotin synthase family. Homodimer. The cofactor is [4Fe-4S] cluster. [2Fe-2S] cluster serves as cofactor.

It carries out the reaction (4R,5S)-dethiobiotin + (sulfur carrier)-SH + 2 reduced [2Fe-2S]-[ferredoxin] + 2 S-adenosyl-L-methionine = (sulfur carrier)-H + biotin + 2 5'-deoxyadenosine + 2 L-methionine + 2 oxidized [2Fe-2S]-[ferredoxin]. It participates in cofactor biosynthesis; biotin biosynthesis; biotin from 7,8-diaminononanoate: step 2/2. Functionally, catalyzes the conversion of dethiobiotin (DTB) to biotin by the insertion of a sulfur atom into dethiobiotin via a radical-based mechanism. The protein is Biotin synthase of Persephonella marina (strain DSM 14350 / EX-H1).